Reading from the N-terminus, the 222-residue chain is Glutathione S-transferase A4 (222 aa).

Met1 bears the N-acetylmethionine mark. Positions 3–83 (AKPKLYYFNG…YLAAKYNLYG (81 aa)) constitute a GST N-terminal domain. Glutathione contacts are provided by residues Tyr9, 53-55 (GQV), and 66-68 (TQT). In terms of domain architecture, GST C-terminal spans 85-208 (DLKERVRIDM…QPGSQRKPPP (124 aa)).

The protein belongs to the GST superfamily. Alpha family. As to quaternary structure, homodimer. In terms of processing, the N-terminus is blocked.

The protein localises to the cytoplasm. It catalyses the reaction RX + glutathione = an S-substituted glutathione + a halide anion + H(+). In terms of biological role, conjugation of reduced glutathione to a wide number of exogenous and endogenous hydrophobic electrophiles. The sequence is that of Glutathione S-transferase A4 (Gsta4) from Mus musculus (Mouse).